A 260-amino-acid chain; its full sequence is Phosphonates import ATP-binding protein PhnC 2 (260 aa).

An ABC transporter domain is found at 4–245 (IQINKATKTY…KNTLRTIYQR (242 aa)). 37–44 (GPSGAGKS) contacts ATP.

This sequence belongs to the ABC transporter superfamily. Phosphonates importer (TC 3.A.1.9.1) family. In terms of assembly, the complex is composed of two ATP-binding proteins (PhnC), two transmembrane proteins (PhnE) and a solute-binding protein (PhnD).

It localises to the cell inner membrane. It catalyses the reaction phosphonate(out) + ATP + H2O = phosphonate(in) + ADP + phosphate + H(+). Its function is as follows. Part of the ABC transporter complex PhnCDE involved in phosphonates import. Responsible for energy coupling to the transport system. The sequence is that of Phosphonates import ATP-binding protein PhnC 2 from Trichodesmium erythraeum (strain IMS101).